The chain runs to 1149 residues: Polyprotein nsP1234 (1149 aa).

A Macro domain is found at 1-160; sequence APSYRVRRTD…KIQEAIDRRT (160 aa). Residues Asp10, Asn24, Gly32, Gly112, Val113, and Phe114 each coordinate ADP-D-ribose. Zn(2+) contacts are provided by Cys262, Cys264, Cys287, and Cys305. Thr344 carries the post-translational modification Phosphothreonine; by host. 2 consecutive short sequence motifs (FGDF; binding to host G3BP1) follow at residues 512 to 515 and 523 to 526; these read FGDF and FGDI. The RdRp catalytic domain maps to 903–1018; that stretch reads DAVLETDIAS…HGVRSDPLMA (116 aa).

As to quaternary structure, interacts with mRNA-capping enzyme nsP1. Interacts with host DDX1. RNA-directed Interacts with host DDX3. Interacts (via C-terminus) with host G3BP1; this interaction inhibits the formation of host stress granules on viral mRNAs and the nsp3-G3BP1 complexes bind viral RNAs and probably orchestrate the assembly of viral replication complexes. Interacts (via C-terminus) with host G3BP2; this interaction inhibits the formation of host stress granules on viral mRNAs and the nsp3-G3BP2 complexes bind viral RNAs and probably orchestrate the assembly of viral replication complexes. In terms of assembly, interacts with itself. Interacts with mRNA-capping enzyme nsP1. Interacts with protease nsP2. Interacts with itself. The cofactor is Mg(2+). Mn(2+) is required as a cofactor. Post-translationally, polyprotein P1234: Specific enzymatic cleavages in vivo yield mature proteins. The processing of the polyprotein is temporally regulated. In early stages (1.7 hpi), P1234 is first cleaved in trans through its nsP2 protease activity, releasing P123' and nsP4, which associate to form the early replication complex. At the same time, P1234 is also cut at the nsP1/nsP2 site early in infection but with lower efficiency. After replication of the viral minus-strand RNAs (4 hpi), the polyproteins are cut at the nsP1/nsP2 and nsP2/nsP3 sites very efficiently, preventing accumulation of P123' and P1234 and allowing the formation of the late replication complex. NsP3'/nsP4 site is not cleaved anymore and P34 is produced rather than nsP4. In terms of processing, specific enzymatic cleavages in vivo yield mature proteins. The processing of the polyprotein is temporally regulated. In early stages (1.7 hpi), P123 is cleaved at the nsP1/nsP2 site with low efficiency. After replication of the viral minus-strand RNAs (4 hpi), the polyproteins are cut at the nsP1/nsP2 and nsP2/nsP3 sites very efficiently, preventing accumulation of P123 and allowing the formation of the late replication complex. Phosphorylated by host on serines and threonines. Post-translationally, ubiquitinated; targets the protein for rapid degradation via the ubiquitin system. Nsp4 is present in extremely low quantities due to low frequency of translation through the amber stop-codon and the degradation by the ubiquitin pathway.

The protein localises to the host cytoplasmic vesicle membrane. The enzyme catalyses RNA(n) + a ribonucleoside 5'-triphosphate = RNA(n+1) + diphosphate. The catalysed reaction is 4-O-(ADP-D-ribosyl)-L-aspartyl-[protein] + H2O = L-aspartyl-[protein] + ADP-D-ribose + H(+). It carries out the reaction 5-O-(ADP-D-ribosyl)-L-glutamyl-[protein] + H2O = L-glutamyl-[protein] + ADP-D-ribose + H(+). It catalyses the reaction RNA(n) + ATP = RNA(n)-3'-adenine ribonucleotide + diphosphate. The enzyme catalyses ADP-alpha-D-ribose 1''-phosphate + H2O = ADP-D-ribose + phosphate. Its function is as follows. Polyprotein P1234: Inactive precursor of the viral replicase, which is activated by cleavages carried out by the viral protease nsP2. The early replication complex formed by the polyprotein P123 and nsP4 synthesizes minus-strand RNAs. As soon P123 is cleaved into mature proteins, the plus-strand RNAs synthesis begins. In terms of biological role, the early replication complex formed by the polyprotein P123' and nsP4 synthesizes minus-strand RNAs. Polyprotein P123' is a short-lived polyprotein that accumulates during early stage of infection. As soon P123' is cleaved into mature proteins, the plus-strand RNAs synthesis begins. Functionally, seems to be essential for minus-strand RNAs and subgenomic 26S mRNAs synthesis. Displays mono-ADP-ribosylhydrolase activity. ADP-ribosylation is a post-translational modification that controls various processes of the host cell and the virus probably needs to revert it for optimal viral replication. Binds proteins of FXR family and sequesters them into the viral RNA replication complexes thereby inhibiting the formation of host stress granules on viral mRNAs. The nsp3'-FXR complexes bind viral RNAs and probably orchestrate the assembly of viral replication complexes, thanks to the ability of FXR family members to self-assemble and bind DNA. Its function is as follows. Seems to be essential for minus-strand RNAs and subgenomic 26S mRNAs synthesis. Displays mono-ADP-ribosylhydrolase activity. ADP-ribosylation is a post-translational modification that controls various processes of the host cell and the virus probably needs to revert it for optimal viral replication. Binds proteins of G3BP family and sequesters them into the viral RNA replication complexes thereby inhibiting the formation of host stress granules on viral mRNAs. The nsp3-G3BP complexes bind viral RNAs and probably orchestrate the assembly of viral replication complexes, thanks to the ability of G3BP family members to self-assemble and bind DNA. RNA dependent RNA polymerase. Replicates genomic and antigenomic RNA by recognizing replications specific signals. The early replication complex formed by the polyprotein P123 and nsP4 synthesizes minus-strand RNAs. The late replication complex composed of fully processed nsP1-nsP4 is responsible for the production of genomic and subgenomic plus-strand RNAs. The protein is Polyprotein nsP1234 of Ross river virus (strain T48) (RRV).